The following is a 496-amino-acid chain: UDP-glycosyltransferase 73C3 (496 aa).

UDP-alpha-D-glucose is bound by residues serine 297, 357–359 (APQ), 374–382 (HCGWNSTLE), and 396–399 (FGDQ).

It belongs to the UDP-glycosyltransferase family.

The sequence is that of UDP-glycosyltransferase 73C3 (UGT73C3) from Arabidopsis thaliana (Mouse-ear cress).